Here is a 351-residue protein sequence, read N- to C-terminus: Anthranilate phosphoribosyltransferase (351 aa).

5-phospho-alpha-D-ribose 1-diphosphate is bound by residues G80, 83 to 84 (GD), T88, 90 to 93 (NIST), 108 to 116 (KHGNRSITS), and S120. Residue G80 coordinates anthranilate. S92 provides a ligand contact to Mg(2+). Residue N111 participates in anthranilate binding. An anthranilate-binding site is contributed by R166. The Mg(2+) site is built by D229 and E230.

This sequence belongs to the anthranilate phosphoribosyltransferase family. As to quaternary structure, homodimer. Mg(2+) is required as a cofactor.

The catalysed reaction is N-(5-phospho-beta-D-ribosyl)anthranilate + diphosphate = 5-phospho-alpha-D-ribose 1-diphosphate + anthranilate. It functions in the pathway amino-acid biosynthesis; L-tryptophan biosynthesis; L-tryptophan from chorismate: step 2/5. Catalyzes the transfer of the phosphoribosyl group of 5-phosphorylribose-1-pyrophosphate (PRPP) to anthranilate to yield N-(5'-phosphoribosyl)-anthranilate (PRA). This is Anthranilate phosphoribosyltransferase from Chlorobaculum parvum (strain DSM 263 / NCIMB 8327) (Chlorobium vibrioforme subsp. thiosulfatophilum).